The chain runs to 375 residues: 23S rRNA (uracil(747)-C(5))-methyltransferase RlmC (375 aa).

The [4Fe-4S] cluster site is built by Cys3, Cys11, Cys14, and Cys87. 4 residues coordinate S-adenosyl-L-methionine: Gln212, Phe241, Glu262, and Asn307. Cys334 acts as the Nucleophile in catalysis.

It belongs to the class I-like SAM-binding methyltransferase superfamily. RNA M5U methyltransferase family. RlmC subfamily.

The catalysed reaction is uridine(747) in 23S rRNA + S-adenosyl-L-methionine = 5-methyluridine(747) in 23S rRNA + S-adenosyl-L-homocysteine + H(+). In terms of biological role, catalyzes the formation of 5-methyl-uridine at position 747 (m5U747) in 23S rRNA. The protein is 23S rRNA (uracil(747)-C(5))-methyltransferase RlmC of Escherichia coli O157:H7.